Reading from the N-terminus, the 660-residue chain is Bifunctional polymyxin resistance protein ArnA (660 aa).

Residues 1-304 (MKTVVFAYHD…MLGLVQGSRL (304 aa)) are formyltransferase ArnAFT. 86–88 (HLI) contacts (6R)-10-formyltetrahydrofolate. Histidine 104 acts as the Proton donor; for formyltransferase activity in catalysis. Residues arginine 114 and 136–140 (VKRAD) each bind (6R)-10-formyltetrahydrofolate. The interval 314–660 (RRTRVLILGV…RTVDLTDKPS (347 aa)) is dehydrogenase ArnADH. NAD(+) is bound by residues aspartate 347 and 368-369 (DI). Residues alanine 393, tyrosine 398, and 432–433 (TS) each bind UDP-alpha-D-glucuronate. The active-site Proton acceptor; for decarboxylase activity is the glutamate 434. UDP-alpha-D-glucuronate-binding positions include arginine 460, asparagine 492, 526–535 (KLIDGGKQKR), and tyrosine 613. Arginine 619 functions as the Proton donor; for decarboxylase activity in the catalytic mechanism.

In the N-terminal section; belongs to the Fmt family. UDP-L-Ara4N formyltransferase subfamily. It in the C-terminal section; belongs to the NAD(P)-dependent epimerase/dehydratase family. UDP-glucuronic acid decarboxylase subfamily. As to quaternary structure, homohexamer, formed by a dimer of trimers.

It catalyses the reaction UDP-alpha-D-glucuronate + NAD(+) = UDP-beta-L-threo-pentopyranos-4-ulose + CO2 + NADH. It carries out the reaction UDP-4-amino-4-deoxy-beta-L-arabinose + (6R)-10-formyltetrahydrofolate = UDP-4-deoxy-4-formamido-beta-L-arabinose + (6S)-5,6,7,8-tetrahydrofolate + H(+). The protein operates within nucleotide-sugar biosynthesis; UDP-4-deoxy-4-formamido-beta-L-arabinose biosynthesis; UDP-4-deoxy-4-formamido-beta-L-arabinose from UDP-alpha-D-glucuronate: step 1/3. Its pathway is nucleotide-sugar biosynthesis; UDP-4-deoxy-4-formamido-beta-L-arabinose biosynthesis; UDP-4-deoxy-4-formamido-beta-L-arabinose from UDP-alpha-D-glucuronate: step 3/3. It participates in bacterial outer membrane biogenesis; lipopolysaccharide biosynthesis. Functionally, bifunctional enzyme that catalyzes the oxidative decarboxylation of UDP-glucuronic acid (UDP-GlcUA) to UDP-4-keto-arabinose (UDP-Ara4O) and the addition of a formyl group to UDP-4-amino-4-deoxy-L-arabinose (UDP-L-Ara4N) to form UDP-L-4-formamido-arabinose (UDP-L-Ara4FN). The modified arabinose is attached to lipid A and is required for resistance to polymyxin and cationic antimicrobial peptides. The chain is Bifunctional polymyxin resistance protein ArnA from Shigella flexneri serotype 5b (strain 8401).